The sequence spans 173 residues: Crossover junction endodeoxyribonuclease RuvC (173 aa).

Catalysis depends on residues aspartate 8, glutamate 67, and aspartate 139. Mg(2+) is bound by residues aspartate 8, glutamate 67, and aspartate 139.

The protein belongs to the RuvC family. Homodimer which binds Holliday junction (HJ) DNA. The HJ becomes 2-fold symmetrical on binding to RuvC with unstacked arms; it has a different conformation from HJ DNA in complex with RuvA. In the full resolvosome a probable DNA-RuvA(4)-RuvB(12)-RuvC(2) complex forms which resolves the HJ. Mg(2+) is required as a cofactor.

Its subcellular location is the cytoplasm. It catalyses the reaction Endonucleolytic cleavage at a junction such as a reciprocal single-stranded crossover between two homologous DNA duplexes (Holliday junction).. In terms of biological role, the RuvA-RuvB-RuvC complex processes Holliday junction (HJ) DNA during genetic recombination and DNA repair. Endonuclease that resolves HJ intermediates. Cleaves cruciform DNA by making single-stranded nicks across the HJ at symmetrical positions within the homologous arms, yielding a 5'-phosphate and a 3'-hydroxyl group; requires a central core of homology in the junction. The consensus cleavage sequence is 5'-(A/T)TT(C/G)-3'. Cleavage occurs on the 3'-side of the TT dinucleotide at the point of strand exchange. HJ branch migration catalyzed by RuvA-RuvB allows RuvC to scan DNA until it finds its consensus sequence, where it cleaves and resolves the cruciform DNA. The sequence is that of Crossover junction endodeoxyribonuclease RuvC from Shewanella sp. (strain ANA-3).